A 569-amino-acid polypeptide reads, in one-letter code: MAATKWRDIDDLPKIPANYTALTPLWFLDRAAVVHPTRKSVIHGSREYTWRQTYDRCRRLASALADRSIGPGSTVAIIAPNIPAMYEAHFGVPMCGAVLNCVNIRLNAPTVAFLLSHSQSSVIMVDQEFFTLAEDSLRLMEEKAGSSFKRPLLIVIGDHTCAPESLNRALSKGAIEYEDFLATGDPNYPWQPPADEWQSIALGYTSGTTASPKGVVLHHRGAYIMALSNPLIWGMQDGAVYLWTLPMFHCNGWCFPWSLAVLSGTSICLRQVTAKEVYSMIAKYKVTHFCAAPVVLNAIVNAPKEDTILPLPHTVHVMTAGAAPPPSVLFSMNQKGFRVAHTYGLSETYGPSTVCAWKPEWDSLPPETQAKLNARQGVRYTGMEQLDVIDTQTGKPVPADGKTAGEIVFRGNMVMKGYLKNPEANKETFAGGWFHSGDIAVKHPDNYIEIKDRSKDVIISGGENISSVEVENVVYHHPAVLEASVVARPDERWQESPCAFVTLKSDYEKHDQNKLAQDIMKFCREKLPAYWVPKSVVFGPLPKTATGKIQKHILRTKAKEMGPVPRSRL.

Positions 567–569 (SRL) match the Microbody targeting signal motif.

Belongs to the ATP-dependent AMP-binding enzyme family. In terms of tissue distribution, expressed in roots, leaves, stems, flowers and developing seeds.

It localises to the peroxisome. The catalysed reaction is acetate + ATP + CoA = acetyl-CoA + AMP + diphosphate. It catalyses the reaction a medium-chain fatty acid + ATP + CoA = a medium-chain fatty acyl-CoA + AMP + diphosphate. In terms of biological role, peroxisomal acetate/butyrate--CoA ligase that is probably involved in the activation of exogenous acetate for entry into the glyoxylate cycle. May play a role to prevent carbon loss from peroxisomes during lipid mobilization. In vitro, is active with both acetate and butyrate. This is Acetate/butyrate--CoA ligase AAE7, peroxisomal (AAE7) from Arabidopsis thaliana (Mouse-ear cress).